Here is a 500-residue protein sequence, read N- to C-terminus: NAD(P)H-quinone oxidoreductase chain 4, chloroplastic (500 aa).

A run of 14 helical transmembrane segments spans residues 4–24 (FPWL…IFFF), 37–57 (ICIC…HFQL), 84–104 (GLSI…TLAA), 111–129 (SRLF…IGSF), 134–154 (LLLF…LLSM), 167–187 (FILY…GMGL), 208–228 (ALEI…SPII), 242–262 (HYST…YGLV), 272–292 (AHSI…IYAA), 305–325 (IAYS…SITD), 330–350 (GAIL…FLAG), 374–396 (IFTM…GFVA), 416–436 (ILIT…SLSM), and 462–482 (LFVS…PDFV).

The protein belongs to the complex I subunit 4 family.

Its subcellular location is the plastid. The protein localises to the chloroplast thylakoid membrane. It carries out the reaction a plastoquinone + NADH + (n+1) H(+)(in) = a plastoquinol + NAD(+) + n H(+)(out). It catalyses the reaction a plastoquinone + NADPH + (n+1) H(+)(in) = a plastoquinol + NADP(+) + n H(+)(out). This is NAD(P)H-quinone oxidoreductase chain 4, chloroplastic from Liriodendron tulipifera (Tuliptree).